The chain runs to 386 residues: MSFRKSNIYLNLLNSYMIDSPQPSSINYWWNLGSLLGLCLVIQICTGIFLAMHYSSNIELAFSAVEHIMRDVQGGWFIRYAHANGASFFFICMYIHIGKGLYYGSYRAPRTLVWNVGVIIFVLTMAAAFLGYCCVYGQMSHWGATVITNLFSAIPFIGNDIVSWLWGGFSVSNPTIQRFFAFHYLVPFIIAAFVIMHFMALHTHGSSNPLGVTGNLDRLPMHGYFIFKDLITVFVFLFFFSLFVFFSPNTMGHPDNYIPGNPLVTPASIVPEWYLLPFYAILRSVPDKLLGVLAMFGAILILLVLPITDRSVIRGNAFKVFSKFFFFLFIANFVLLGHLGECHVEPPFVVMGQIATVIYFAYFLVIVPVVSTIENVLFYVGRKNAK.

4 helical membrane passes run 32–52, 76–98, 113–133, and 179–199; these read LGSLLGLCLVIQICTGIFLAM, WFIRYAHANGASFFFICMYIHIG, VWNVGVIIFVLTMAAAFLGYC, and FFAFHYLVPFIIAAFVIMHFM. Residues histidine 82 and histidine 96 each coordinate heme b. Heme b contacts are provided by histidine 183 and histidine 197. Histidine 202 contributes to the a ubiquinone binding site. 4 consecutive transmembrane segments (helical) span residues 225–245, 289–309, 321–341, and 348–368; these read FIFKDLITVFVFLFFFSLFVF, LLGVLAMFGAILILLVLPITD, FSKFFFFLFIANFVLLGHLGE, and FVVMGQIATVIYFAYFLVIVP.

Belongs to the cytochrome b family. In terms of assembly, fungal cytochrome b-c1 complex contains 10 subunits; 3 respiratory subunits, 2 core proteins and 5 low-molecular weight proteins. Cytochrome b-c1 complex is a homodimer. The cofactor is heme b.

It localises to the mitochondrion inner membrane. In terms of biological role, component of the ubiquinol-cytochrome c reductase complex (complex III or cytochrome b-c1 complex) that is part of the mitochondrial respiratory chain. The b-c1 complex mediates electron transfer from ubiquinol to cytochrome c. Contributes to the generation of a proton gradient across the mitochondrial membrane that is then used for ATP synthesis. This chain is Cytochrome b (COB), found in Kluyveromyces lactis (strain ATCC 8585 / CBS 2359 / DSM 70799 / NBRC 1267 / NRRL Y-1140 / WM37) (Yeast).